Here is a 143-residue protein sequence, read N- to C-terminus: Ribosome-binding factor A (143 aa).

The interval 117–143 is disordered; it reads DAEIARRSQGAMPAGEADPYRHSDEEE. Residues 134–143 show a composition bias toward basic and acidic residues; it reads DPYRHSDEEE.

It belongs to the RbfA family. In terms of assembly, monomer. Binds 30S ribosomal subunits, but not 50S ribosomal subunits or 70S ribosomes.

It localises to the cytoplasm. Functionally, one of several proteins that assist in the late maturation steps of the functional core of the 30S ribosomal subunit. Associates with free 30S ribosomal subunits (but not with 30S subunits that are part of 70S ribosomes or polysomes). Required for efficient processing of 16S rRNA. May interact with the 5'-terminal helix region of 16S rRNA. The sequence is that of Ribosome-binding factor A from Cutibacterium acnes (strain DSM 16379 / KPA171202) (Propionibacterium acnes).